The following is a 417-amino-acid chain: Vacuolar cation/proton exchanger 3 (417 aa).

The Cytoplasmic segment spans residues Met-1–Arg-45. Residues Ile-46–Leu-66 form a helical membrane-spanning segment. Over His-67–His-73 the chain is Extracellular. The chain crosses the membrane as a helical span at residues Gly-74–Ala-94. The Cytoplasmic segment spans residues Thr-95 to Thr-105. Residues Val-106 to Ala-126 form a helical membrane-spanning segment. A cation selection region spans residues Gly-115–Val-150. Topologically, residues Leu-127–Leu-140 are extracellular. Residues Gly-141–Val-161 traverse the membrane as a helical segment. The Cytoplasmic segment spans residues His-162 to Thr-173. The chain crosses the membrane as a helical span at residues Ala-174–Leu-194. Residues His-195–Glu-207 lie on the Extracellular side of the membrane. Residues Val-208–Leu-230 form a helical membrane-spanning segment. The Cytoplasmic segment spans residues Ser-231–Glu-258. A helical transmembrane segment spans residues Ile-259 to Ser-279. At Glu-280–Asp-291 the chain is on the extracellular side. The chain crosses the membrane as a helical span at residues Ser-292–Ala-312. Residues Gly-309–Val-344 form a cation selection region. Topologically, residues Glu-313–Leu-330 are cytoplasmic. Residues Gly-331–Ile-351 form a helical membrane-spanning segment. Over Gly-352–Asp-360 the chain is Extracellular. A helical transmembrane segment spans residues Leu-361–Met-381. Over Leu-382–Tyr-389 the chain is Cytoplasmic. A helical membrane pass occupies residues Leu-390–Val-410. Residues Asp-411–Asp-417 are Extracellular-facing.

It belongs to the Ca(2+):cation antiporter (CaCA) (TC 2.A.19) family. Cation/proton exchanger (CAX) subfamily. Ubiquitous.

The protein localises to the vacuole membrane. Functionally, vacuolar cation/proton exchanger (CAX). Translocates Ca(2+) and other metal ions into vacuoles using the proton gradient formed by H(+)-ATPase and H(+)-pyrophosphatase. The polypeptide is Vacuolar cation/proton exchanger 3 (CAX3) (Oryza sativa subsp. japonica (Rice)).